The following is a 309-amino-acid chain: Carbamate kinase 3 (309 aa).

Belongs to the carbamate kinase family.

Its subcellular location is the cytoplasm. The catalysed reaction is hydrogencarbonate + NH4(+) + ATP = carbamoyl phosphate + ADP + H2O + H(+). The protein operates within metabolic intermediate metabolism; carbamoyl phosphate degradation; CO(2) and NH(3) from carbamoyl phosphate: step 1/1. In Staphylococcus aureus (strain USA300), this protein is Carbamate kinase 3 (arcC3).